The sequence spans 1409 residues: Adhesion and penetration protein autotransporter (1409 aa).

Positions 1–25 (MKKTVFRLNFLTACVSLGIASQAWA) are cleaved as a signal peptide. The region spanning 26-294 (GHTYFGIDYQ…LIREEWFYNE (269 aa)) is the Peptidase S6 domain. Residue serine 250 is part of the active site. 2 disordered regions span residues 866–888 (YSAS…TPTS) and 1016–1078 (AKQV…SKRA). Residues 1057 to 1067 (VEQTTETQTSK) show a composition bias toward polar residues. The segment covering 1068-1077 (PKTKKGRSKR) has biased composition (basic residues). The Autotransporter domain maps to 1156 to 1409 (VDQAQSALWT…NVGVKLGYRW (254 aa)).

The protein localises to the periplasm. Its subcellular location is the secreted. It is found in the cell surface. The protein resides in the cell outer membrane. Its function is as follows. Probable protease; promotes adherence and invasion by directly binding to a host cell structure. The protein is Adhesion and penetration protein autotransporter (hap) of Haemophilus influenzae (strain ATCC 51907 / DSM 11121 / KW20 / Rd).